Here is a 671-residue protein sequence, read N- to C-terminus: UvrABC system protein B (671 aa).

A Helicase ATP-binding domain is found at 26-183 (EGLENGLAHQ…RRLSELQYSR (158 aa)). Residue 39–46 (GVTGSGKT) participates in ATP binding. Positions 92-115 (YYDYYQPEAYVPSSDTFIEKDASV) match the Beta-hairpin motif. A Helicase C-terminal domain is found at 431-593 (QVDDLLSEIR…IIPQGLNKKI (163 aa)). The UVR domain occupies 631–666 (DQKIRELEAKMYTYAQNLEFEQAAELRDQVHQLRQQ).

The protein belongs to the UvrB family. In terms of assembly, forms a heterotetramer with UvrA during the search for lesions. Interacts with UvrC in an incision complex.

It is found in the cytoplasm. The UvrABC repair system catalyzes the recognition and processing of DNA lesions. A damage recognition complex composed of 2 UvrA and 2 UvrB subunits scans DNA for abnormalities. Upon binding of the UvrA(2)B(2) complex to a putative damaged site, the DNA wraps around one UvrB monomer. DNA wrap is dependent on ATP binding by UvrB and probably causes local melting of the DNA helix, facilitating insertion of UvrB beta-hairpin between the DNA strands. Then UvrB probes one DNA strand for the presence of a lesion. If a lesion is found the UvrA subunits dissociate and the UvrB-DNA preincision complex is formed. This complex is subsequently bound by UvrC and the second UvrB is released. If no lesion is found, the DNA wraps around the other UvrB subunit that will check the other stand for damage. The polypeptide is UvrABC system protein B (Yersinia pestis bv. Antiqua (strain Antiqua)).